We begin with the raw amino-acid sequence, 638 residues long: Probable inactive receptor kinase At4g23740 (638 aa).

The first 24 residues, 1–24 (MEALRIYLWSLCLSLCLIIYGANS), serve as a signal peptide directing secretion. LRR repeat units follow at residues 94-117 (ALRV…VELK), 118-139 (DLAF…DFSV), 142-165 (NLTS…SRLK), 166-188 (RIQS…SVLS), and 189-198 (SLQHIDLSNN). Residues 257-277 (VFLLIVIAVSIVVITALAFVL) traverse the membrane as a helical segment. In terms of domain architecture, Protein kinase spans 337 to 608 (RASAEVLGKG…SDLVRLIENV (272 aa)). Ser-339 is modified (phosphoserine). 343–351 (LGKGTFGTT) provides a ligand contact to ATP. Phosphothreonine is present on Thr-360. Lys-365 lines the ATP pocket. 2 positions are modified to phosphoserine: Ser-416 and Ser-419. Phosphothreonine is present on residues Thr-436 and Thr-509. The residue at position 513 (Ser-513) is a Phosphoserine. The segment at 612–638 (RTSIEPEPELKPKSENGASETSTPSEI) is disordered. Over residues 613 to 625 (TSIEPEPELKPKS) the composition is skewed to basic and acidic residues. Positions 627 to 638 (NGASETSTPSEI) are enriched in polar residues.

Belongs to the protein kinase superfamily.

Its subcellular location is the membrane. The polypeptide is Probable inactive receptor kinase At4g23740 (Arabidopsis thaliana (Mouse-ear cress)).